Consider the following 282-residue polypeptide: Homeobox protein Hox-C12 (282 aa).

Disordered stretches follow at residues 94-129 (YYRE…PLEP) and 147-214 (GGDG…NSRS). Positions 162–175 (SCQSLESDSSSSLL) are enriched in low complexity. A DNA-binding region (homeobox) is located at residues 214-273 (SRKKRKPYSKLQLAELEGEFLVNEFITRQRRRELSDRLNLSDQQVKIWFQNRRMKKKRLL).

It belongs to the Abd-B homeobox family.

The protein resides in the nucleus. In terms of biological role, sequence-specific transcription factor which is part of a developmental regulatory system that provides cells with specific positional identities on the anterior-posterior axis. The protein is Homeobox protein Hox-C12 (HOXC12) of Homo sapiens (Human).